A 359-amino-acid polypeptide reads, in one-letter code: RNA-binding protein 4B (359 aa).

RRM domains are found at residues 2 to 72 (VKLF…ASKN) and 78 to 148 (TKLH…LSTS). The segment at 160-177 (SGCYRCGKEGHWSKECPV) adopts a CCHC-type zinc-finger fold. Positions 196 to 359 (AVRTPYTMGY…YVDRARYSAF (164 aa)) are interaction with TNPO3.

As to quaternary structure, interacts with TNPO3, which may mediate nuclear import of the protein. As to expression, expressed in liver and kidney (at protein level). Ubiquitously expressed.

It localises to the nucleus. The protein resides in the nucleolus. In terms of biological role, required for the translational activation of PER1 mRNA in response to circadian clock. Binds directly to the 3'-UTR of the PER1 mRNA. This is RNA-binding protein 4B (RBM4B) from Homo sapiens (Human).